The sequence spans 240 residues: Glutathione S-transferase theta-1 (240 aa).

Residues 2 to 82 form the GST N-terminal domain; the sequence is GLELYLDLLS…YLARKYKVPD (81 aa). Residues His-40, 53–54, and 66–67 contribute to the glutathione site; these read KV and ES. A GST C-terminal domain is found at 88-226; that stretch reads DLQACARVDE…AKDSQPADPT (139 aa).

This sequence belongs to the GST superfamily. Theta family. In terms of assembly, homodimer.

Its subcellular location is the cytoplasm. The enzyme catalyses RX + glutathione = an S-substituted glutathione + a halide anion + H(+). Conjugation of reduced glutathione to a wide number of exogenous and endogenous hydrophobic electrophiles. Also binds steroids, bilirubin, carcinogens and numerous organic anions. Has dichloromethane dehalogenase activity. In Bos taurus (Bovine), this protein is Glutathione S-transferase theta-1 (GSTT1).